Reading from the N-terminus, the 688-residue chain is DNA-directed RNA polymerase subunit beta' (688 aa).

Residues Cys69, Cys71, Cys87, and Cys90 each contribute to the Zn(2+) site. Asp489, Asp491, and Asp493 together coordinate Mg(2+).

It belongs to the RNA polymerase beta' chain family. RpoC1 subfamily. As to quaternary structure, in plastids the minimal PEP RNA polymerase catalytic core is composed of four subunits: alpha, beta, beta', and beta''. When a (nuclear-encoded) sigma factor is associated with the core the holoenzyme is formed, which can initiate transcription. It depends on Mg(2+) as a cofactor. Zn(2+) serves as cofactor.

It is found in the plastid. The protein resides in the chloroplast. It carries out the reaction RNA(n) + a ribonucleoside 5'-triphosphate = RNA(n+1) + diphosphate. Functionally, DNA-dependent RNA polymerase catalyzes the transcription of DNA into RNA using the four ribonucleoside triphosphates as substrates. The protein is DNA-directed RNA polymerase subunit beta' of Piper cenocladum (Ant piper).